Here is a 414-residue protein sequence, read N- to C-terminus: uncharacterized protein (414 aa).

At 1–66 (MNPSVPKVMK…LQRISKDYLK (66 aa)) the chain is on the lumenal side. The segment at 20–51 (SKEMNDTSLQLPSTTRSLSPKESNSNEDFNVD) is disordered. Residues 25–51 (DTSLQLPSTTRSLSPKESNSNEDFNVD) show a composition bias toward polar residues. A Glycyl lysine isopeptide (Lys-Gly) (interchain with G-Cter in ubiquitin) cross-link involves residue lysine 40. Residues 67-87 (PNIGLVLLTVSYFFNSAMVVS) traverse the membrane as a helical segment. The EamA 1 domain occupies 78-215 (YFFNSAMVVS…SLLGVVLIVR (138 aa)). Over 88-106 (TKVLENDPDDIANDRQIKP) the chain is Cytoplasmic. Residues 107-127 (LQILLVRMVITYIGTLIYMYI) form a helical membrane-spanning segment. At 128-144 (NKSTISDVPFGKPEVRK) the chain is on the lumenal side. The chain crosses the membrane as a helical span at residues 145-167 (WLVLRGCTGFFGVFGMYYSLMYL). Residues 168–171 (TISD) are Cytoplasmic-facing. The helical transmembrane segment at 172-191 (AVLITFLAPSLTIFLSWVIL) threads the bilayer. The Lumenal portion of the chain corresponds to 192–199 (RERFTKVE). Residues 200–220 (ALGSLISLLGVVLIVRPSFLF) form a helical membrane-spanning segment. The Cytoplasmic segment spans residues 221–241 (GTPELTDSSSQIVESSDPKSR). Residues 242–262 (LIATLVGLWGVLGMSCVYIII) traverse the membrane as a helical segment. The EamA 2 domain occupies 253 to 379 (LGMSCVYIII…IISATLWVIR (127 aa)). Topologically, residues 263–269 (RYIGKRA) are lumenal. A helical membrane pass occupies residues 270 to 290 (HAIMSVSYFSLITAIVSFIGI). Topologically, residues 291–307 (NTIPSMKFQIPHSKKQW) are cytoplasmic. The helical transmembrane segment at 308–328 (ILFGNLGVSGFIFQLLLTMGI) threads the bilayer. Topologically, residues 329–357 (QRERAGRGSLMTYTQLLYAVFWDVALYKH) are lumenal. Residues 358-378 (WPNIWSWIGMIIIISATLWVI) traverse the membrane as a helical segment. The Cytoplasmic segment spans residues 379–414 (RIRAANNETTAKDLTPIIDDEENSIPLTEFDLSDSK).

This sequence to yeast YPL264c.

The protein localises to the membrane. This is an uncharacterized protein from Saccharomyces cerevisiae (strain ATCC 204508 / S288c) (Baker's yeast).